Reading from the N-terminus, the 271-residue chain is Ribosomal RNA small subunit methyltransferase A (271 aa).

S-adenosyl-L-methionine is bound by residues N19, L21, G46, E67, D92, and N113.

Belongs to the class I-like SAM-binding methyltransferase superfamily. rRNA adenine N(6)-methyltransferase family. RsmA subfamily.

Its subcellular location is the cytoplasm. The enzyme catalyses adenosine(1518)/adenosine(1519) in 16S rRNA + 4 S-adenosyl-L-methionine = N(6)-dimethyladenosine(1518)/N(6)-dimethyladenosine(1519) in 16S rRNA + 4 S-adenosyl-L-homocysteine + 4 H(+). Specifically dimethylates two adjacent adenosines (A1518 and A1519) in the loop of a conserved hairpin near the 3'-end of 16S rRNA in the 30S particle. May play a critical role in biogenesis of 30S subunits. In Photobacterium profundum (strain SS9), this protein is Ribosomal RNA small subunit methyltransferase A.